The following is a 188-amino-acid chain: Peptide methionine sulfoxide reductase MsrA (188 aa).

The interval 1–25 (MEGNEKAEQKNATSEESTDIFENPG) is disordered. The active site involves Cys-37.

It belongs to the MsrA Met sulfoxide reductase family.

The catalysed reaction is L-methionyl-[protein] + [thioredoxin]-disulfide + H2O = L-methionyl-(S)-S-oxide-[protein] + [thioredoxin]-dithiol. It carries out the reaction [thioredoxin]-disulfide + L-methionine + H2O = L-methionine (S)-S-oxide + [thioredoxin]-dithiol. Its function is as follows. Has an important function as a repair enzyme for proteins that have been inactivated by oxidation. Catalyzes the reversible oxidation-reduction of methionine sulfoxide in proteins to methionine. The chain is Peptide methionine sulfoxide reductase MsrA from Methanosarcina acetivorans (strain ATCC 35395 / DSM 2834 / JCM 12185 / C2A).